Reading from the N-terminus, the 329-residue chain is MFVFVGSTVSLTAIVAAPVLTWIWANHLEPNLLKLTRLDWRLPKKFAHLHGLRIVQISDLHLNQSTPDAFLKKISRKVSSLSPDMLVFTGDFICRAKVESSNKLKNFLCSLNAPLGCFACLGNHDYATYVSRDIHGKINTIPETSSRPLRRALTSVYQSLFSSSHNEFAEEFTPQDPNPHLLSILHNTPFQLLHNQSVTLSDVVNIVGLGDFFAKQFDPKKAFTNYNPTLPGIILSHNPDTIHYLKDYPGDVVFSGHSHGPQISLPWPKFANTITNKLSGLENPELARGLFSFPQEKRLLYVNRGLGGWKRIRFFSPPEICIMRCLYEP.

The helical transmembrane segment at 2–24 (FVFVGSTVSLTAIVAAPVLTWIW) threads the bilayer. Positions 59, 61, 91, 123, 257, and 259 each coordinate a divalent metal cation.

It belongs to the metallophosphoesterase superfamily. Requires Mn(2+) as cofactor.

The protein resides in the cell inner membrane. It catalyses the reaction UDP-2,3-diacyl-alpha-D-glucosamine + H2O = 2,3-diacyl-alpha-D-glucosaminyl 1-phosphate + UMP + 2 H(+). It functions in the pathway glycolipid biosynthesis; lipid IV(A) biosynthesis. In terms of biological role, hydrolyzes the pyrophosphate bond of UDP-2,3-diacylglucosamine to form 2,3-diacylglucosamine 1-phosphate (lipid X) and UMP by catalyzing the attack of water at the alpha-P atom. Involved in the biosynthesis of lipid A, a phosphorylated glycolipid that anchors the lipooligosaccharide (LOS) to the outer membrane of the cell. In Chlamydia muridarum (strain MoPn / Nigg), this protein is UDP-2,3-diacylglucosamine pyrophosphatase LpxG.